Consider the following 274-residue polypeptide: uncharacterized protein (274 aa).

Residues 1–15 (MEESKTKRKEDRIDL) are compositionally biased toward basic and acidic residues. The disordered stretch occupies residues 1–40 (MEESKTKRKEDRIDLKNTPPQKKSKRDSTNDETARTSLRS). The 47-residue stretch at 41-87 (IMPRGYKMMENMGYKEGETLGSNESALKEPIKVEINTKRRGIRAEKP) folds into the G-patch domain.

It localises to the cytoplasm. It is found in the nucleus. This is an uncharacterized protein from Saccharomyces cerevisiae (strain ATCC 204508 / S288c) (Baker's yeast).